The chain runs to 88 residues: Small cysteine-rich outer membrane protein OmcA (88 aa).

Positions 1–18 (MKKTALLAALCSVVSLSS) are cleaved as a signal peptide. Cysteine 19 carries the N-palmitoyl cysteine lipid modification. Cysteine 19 is lipidated: S-diacylglycerol cysteine.

Part of a disulfide cross-linked outer membrane complex (COMC) composed of the major outer membrane porin (MOMP), the small cysteine-rich protein (OmcA) and the large cysteine-rich periplasmic protein (OmcB).

It is found in the cell outer membrane. In terms of biological role, in elementary bodies (EBs, the infectious stage, which is able to survive outside the host cell) provides the structural integrity of the outer envelope through disulfide cross-links with the large cysteine-rich periplasmic protein and the major outer membrane porin. It has been described in publications as the Sarkosyl-insoluble COMC (Chlamydia outer membrane complex), and serves as the functional equivalent of peptidoglycan. The protein is Small cysteine-rich outer membrane protein OmcA (omcA) of Chlamydia muridarum (strain MoPn / Nigg).